The primary structure comprises 176 residues: Nucleoside triphosphate/diphosphate phosphatase (176 aa).

R23 serves as the catalytic Proton donor. Mg(2+) contacts are provided by N87, D103, D105, D107, D120, and E123.

Belongs to the Ntdp family. Mg(2+) serves as cofactor.

The catalysed reaction is a ribonucleoside 5'-triphosphate + H2O = a ribonucleoside 5'-diphosphate + phosphate + H(+). It carries out the reaction a ribonucleoside 5'-diphosphate + H2O = a ribonucleoside 5'-phosphate + phosphate + H(+). Has nucleoside phosphatase activity towards nucleoside triphosphates and nucleoside diphosphates. The polypeptide is Nucleoside triphosphate/diphosphate phosphatase (Bacillus cereus (strain G9842)).